Here is a 393-residue protein sequence, read N- to C-terminus: S-adenosylmethionine synthase 2 (393 aa).

Residue E9 coordinates Mg(2+). Position 15 (H15) interacts with ATP. A K(+)-binding site is contributed by E43. Residues E56 and Q99 each coordinate L-methionine. ATP contacts are provided by residues 167–169, 235–238, D246, 252–253, A269, K273, and K277; these read DGK, SGRF, and RK. D246 provides a ligand contact to L-methionine. L-methionine is bound at residue K277.

This sequence belongs to the AdoMet synthase family. As to quaternary structure, homotetramer. The cofactor is Mn(2+). Mg(2+) serves as cofactor. It depends on Co(2+) as a cofactor. Requires K(+) as cofactor.

It localises to the cytoplasm. The enzyme catalyses L-methionine + ATP + H2O = S-adenosyl-L-methionine + phosphate + diphosphate. Its pathway is amino-acid biosynthesis; S-adenosyl-L-methionine biosynthesis; S-adenosyl-L-methionine from L-methionine: step 1/1. Its function is as follows. Catalyzes the formation of S-adenosylmethionine from methionine and ATP. The reaction comprises two steps that are both catalyzed by the same enzyme: formation of S-adenosylmethionine (AdoMet) and triphosphate, and subsequent hydrolysis of the triphosphate. May be involved in the synthesis of betain in response to abiotic stress such as high salinity. This chain is S-adenosylmethionine synthase 2 (SAMS2), found in Beta vulgaris (Sugar beet).